A 205-amino-acid chain; its full sequence is Protein Nef (205 aa).

A lipid anchor (N-myristoyl glycine; by host) is attached at Gly-2. A Phosphoserine; by host modification is found at Ser-6. An acidic; interacts with host PACS1 and PACS2; stabilizes the interaction of NEF/MHC-I with host AP1M1; necessary for MHC-I internalization region spans residues Glu-61–Glu-65. Residues Pro-69–Pro-78 are SH3-binding; interaction with Src family tyrosine kinases. Residues Pro-72 to Pro-75 carry the PxxP; stabilizes the interaction of NEF/MHC-I with host AP1M1; necessary for MHC-I internalization motif. The segment at Glu-108–Trp-124 is mediates dimerization, Nef-PTE1 interaction. A binding to ATP6V1H region spans residues Val-148–Val-180. The short motif at Leu-164–Leu-165 is the Dileucine internalization motif; necessary for CD4 internalization element. The short motif at Asp-174–Asp-175 is the Diacidic; necessary for CD4 internalization element.

This sequence belongs to the lentivirus primate group Nef protein family. Monomer; cytosolic form. Homodimer; membrane bound form. Interacts with Nef associated p21-activated kinase (PAK2); this interaction activates PAK2. Associates with the Nef-MHC-I-AP1 complex; this complex is required for MHC-I internalization. Interacts (via C-terminus) with host PI3-kinase. Interacts with host PACS1; this interaction seems to be weak. Interacts with host PACS2. Interacts with host LCK and MAPK3; these interactions inhibit the kinase activity of the latter. Interacts with host ATP6V1H; this interaction may play a role in CD4 endocytosis. Associates with the CD4-Nef-AP2 complex; this complex is required for CD4 internalization. Interacts with host AP2 subunit alpha and AP2 subunit sigma2. Interacts with TCR-zeta chain; this interaction up-regulates the Fas ligand (FasL) surface expression. Interacts with host HCK, LYN, and SRC; these interactions activate the Src family kinases. Interacts with MAP3K5; this interaction inhibits the Fas and TNFR-mediated death signals. Interacts with beta-COP and PTE1. Interacts with human RACK1; this increases Nef phosphorylation by PKC. Interacts with TP53; this interaction decreases the half-life of TP53, protecting the infected cell against p53-mediated apoptosis. In terms of processing, the virion-associated Nef proteins are cleaved by the viral protease to release the soluble C-terminal core protein. Nef is probably cleaved concomitantly with viral structural proteins on maturation of virus particles. Myristoylated. Post-translationally, phosphorylated on serine residues, probably by host PKCdelta and theta.

It is found in the host cell membrane. The protein resides in the virion. The protein localises to the secreted. It localises to the host Golgi apparatus membrane. Functionally, factor of infectivity and pathogenicity, required for optimal virus replication. Alters numerous pathways of T-lymphocyte function and down-regulates immunity surface molecules in order to evade host defense and increase viral infectivity. Alters the functionality of other immunity cells, like dendritic cells, monocytes/macrophages and NK cells. In terms of biological role, in infected CD4(+) T-lymphocytes, down-regulates the surface MHC-I, mature MHC-II, CD4, CD28, CCR5 and CXCR4 molecules. Mediates internalization and degradation of host CD4 through the interaction of with the cytoplasmic tail of CD4, the recruitment of AP-2 (clathrin adapter protein complex 2), internalization through clathrin coated pits, and subsequent transport to endosomes and lysosomes for degradation. Diverts host MHC-I molecules to the trans-Golgi network-associated endosomal compartments by an endocytic pathway to finally target them for degradation. MHC-I down-regulation may involve AP-1 (clathrin adapter protein complex 1) or possibly Src family kinase-ZAP70/Syk-PI3K cascade recruited by PACS2. In consequence infected cells are masked for immune recognition by cytotoxic T-lymphocytes. Decreasing the number of immune receptors also prevents reinfection by more HIV particles (superinfection). Down-regulates host SERINC3 and SERINC5 thereby excluding these proteins from the viral particles. Virion infectivity is drastically higher when SERINC3 or SERINC5 are excluded from the viral envelope, because these host antiviral proteins impair the membrane fusion event necessary for subsequent virion penetration. Bypasses host T-cell signaling by inducing a transcriptional program nearly identical to that of anti-CD3 cell activation. Interaction with TCR-zeta chain up-regulates the Fas ligand (FasL). Increasing surface FasL molecules and decreasing surface MHC-I molecules on infected CD4(+) cells send attacking cytotoxic CD8+ T-lymphocytes into apoptosis. Its function is as follows. Plays a role in optimizing the host cell environment for viral replication without causing cell death by apoptosis. Protects the infected cells from apoptosis in order to keep them alive until the next virus generation is ready to strike. Inhibits the Fas and TNFR-mediated death signals by blocking MAP3K5/ASK1. Decreases the half-life of TP53, protecting the infected cell against p53-mediated apoptosis. Inhibits the apoptotic signals regulated by the Bcl-2 family proteins through the formation of a Nef/PI3-kinase/PAK2 complex that leads to activation of PAK2 and induces phosphorylation of host BAD. Functionally, extracellular Nef protein targets CD4(+) T-lymphocytes for apoptosis by interacting with CXCR4 surface receptors. This is Protein Nef from Human immunodeficiency virus type 1 group M subtype A (isolate Z321) (HIV-1).